Here is a 245-residue protein sequence, read N- to C-terminus: Leucyl/phenylalanyl-tRNA--protein transferase (245 aa).

Belongs to the L/F-transferase family.

The protein resides in the cytoplasm. It carries out the reaction N-terminal L-lysyl-[protein] + L-leucyl-tRNA(Leu) = N-terminal L-leucyl-L-lysyl-[protein] + tRNA(Leu) + H(+). The catalysed reaction is N-terminal L-arginyl-[protein] + L-leucyl-tRNA(Leu) = N-terminal L-leucyl-L-arginyl-[protein] + tRNA(Leu) + H(+). It catalyses the reaction L-phenylalanyl-tRNA(Phe) + an N-terminal L-alpha-aminoacyl-[protein] = an N-terminal L-phenylalanyl-L-alpha-aminoacyl-[protein] + tRNA(Phe). Functions in the N-end rule pathway of protein degradation where it conjugates Leu, Phe and, less efficiently, Met from aminoacyl-tRNAs to the N-termini of proteins containing an N-terminal arginine or lysine. This Paraburkholderia phymatum (strain DSM 17167 / CIP 108236 / LMG 21445 / STM815) (Burkholderia phymatum) protein is Leucyl/phenylalanyl-tRNA--protein transferase.